We begin with the raw amino-acid sequence, 276 residues long: NH(3)-dependent NAD(+) synthetase (276 aa).

Position 43–50 (G43–S50) interacts with ATP. D49 is a binding site for Mg(2+). Position 146 (R146) interacts with deamido-NAD(+). T166 is a binding site for ATP. E171 lines the Mg(2+) pocket. The deamido-NAD(+) site is built by K179 and D186. Residues K195 and T217 each contribute to the ATP site. H266–K267 is a deamido-NAD(+) binding site.

This sequence belongs to the NAD synthetase family. As to quaternary structure, homodimer.

The enzyme catalyses deamido-NAD(+) + NH4(+) + ATP = AMP + diphosphate + NAD(+) + H(+). It participates in cofactor biosynthesis; NAD(+) biosynthesis; NAD(+) from deamido-NAD(+) (ammonia route): step 1/1. Functionally, catalyzes the ATP-dependent amidation of deamido-NAD to form NAD. Uses ammonia as a nitrogen source. In Vibrio parahaemolyticus serotype O3:K6 (strain RIMD 2210633), this protein is NH(3)-dependent NAD(+) synthetase.